The chain runs to 146 residues: 3-hydroxyacyl-[acyl-carrier-protein] dehydratase FabZ (146 aa).

H49 is an active-site residue.

The protein belongs to the thioester dehydratase family. FabZ subfamily.

Its subcellular location is the cytoplasm. It catalyses the reaction a (3R)-hydroxyacyl-[ACP] = a (2E)-enoyl-[ACP] + H2O. Involved in unsaturated fatty acids biosynthesis. Catalyzes the dehydration of short chain beta-hydroxyacyl-ACPs and long chain saturated and unsaturated beta-hydroxyacyl-ACPs. The chain is 3-hydroxyacyl-[acyl-carrier-protein] dehydratase FabZ from Psychrobacter arcticus (strain DSM 17307 / VKM B-2377 / 273-4).